A 25-amino-acid polypeptide reads, in one-letter code: Caerin-1.3 (25 aa).

Leu25 carries the post-translational modification Leucine amide.

Expressed by the skin parotoid and/or rostral glands.

The protein localises to the secreted. In terms of biological role, antibacterial peptide, that adopts an alpha helical conformation which can disrupt bacterial membranes. Each caerin displays a different antimicrobial specificity. The chain is Caerin-1.3 from Ranoidea caerulea (Green tree frog).